Here is a 424-residue protein sequence, read N- to C-terminus: MLDIKFLRTNFEEVKAKLQHRGEDLTDFGRFEELDTRRRELLVQTEELKSKRNEVSQQISVLKREKKDAESLILEMREVGEKVKDLDNELRTVEEDLERLMLSIPNIPHESAPVGETEDDNVVARTWGEVKEFAFEPKPHWDLATDLGILDFERAGKVTGSRFVFYKGAGARLERALISFMLDLHTDEHGYEEVLPPYMVNRASMTGTGQLPKFEEDAFRIESEDYFLIPTAEVPVTNMHRDEILNKEQLPIRYAAFSSCFRSEAGSAGRDTRGLIRQHQFNKVELVKFVKPEDSYEELEKLXNDAERVLQLLELPYRVMSMCTGDLGFTAAKKYDIEVWIPSYGTYREISSCSNFEAFQARRANIRFRREPNGKPEHVHTLNGSGLAIGRTVAAILENYQQEDGTIIIPEVLRPYMGGKTVIK.

231-233 (TAE) is an L-serine binding site. An ATP-binding site is contributed by 262–264 (RSE). Glu285 is an L-serine binding site. 349 to 352 (EISS) contributes to the ATP binding site. Residue Ser385 participates in L-serine binding.

This sequence belongs to the class-II aminoacyl-tRNA synthetase family. Type-1 seryl-tRNA synthetase subfamily. Homodimer. The tRNA molecule binds across the dimer.

It localises to the cytoplasm. It catalyses the reaction tRNA(Ser) + L-serine + ATP = L-seryl-tRNA(Ser) + AMP + diphosphate + H(+). It carries out the reaction tRNA(Sec) + L-serine + ATP = L-seryl-tRNA(Sec) + AMP + diphosphate + H(+). It functions in the pathway aminoacyl-tRNA biosynthesis; selenocysteinyl-tRNA(Sec) biosynthesis; L-seryl-tRNA(Sec) from L-serine and tRNA(Sec): step 1/1. Its function is as follows. Catalyzes the attachment of serine to tRNA(Ser). Is also able to aminoacylate tRNA(Sec) with serine, to form the misacylated tRNA L-seryl-tRNA(Sec), which will be further converted into selenocysteinyl-tRNA(Sec). This Bacillus cereus (strain ATCC 10987 / NRS 248) protein is Serine--tRNA ligase.